Here is a 228-residue protein sequence, read N- to C-terminus: Phosphatidylglycerophosphate phosphatase PTPMT2 (228 aa).

Over residues 1–10 the composition is skewed to acidic residues; it reads MTDETEEDDT. The disordered stretch occupies residues 1 to 30; that stretch reads MTDETEEDDTTQQRSSRNDGVSKNKGKGFK. Positions 48 and 126 each coordinate substrate. One can recognise a Tyrosine-protein phosphatase domain in the interval 66 to 213; it reads WWDQIDEYLL…VEEFSRLQSP (148 aa). Cysteine 157 serves as the catalytic Phosphocysteine intermediate. The short motif at 157 to 163 is the Glucan phosphatase signature motif CXAGXGR element; that stretch reads CKAGRGR. Substrate is bound at residue 158–163; the sequence is KAGRGR.

This sequence belongs to the protein-tyrosine phosphatase family. Non-receptor class dual specificity subfamily. Expressed in roots, leaves, stems and flowers. In terms of tissue distribution, expressed at low levels in stems and flowers.

The catalysed reaction is O-phospho-L-seryl-[protein] + H2O = L-seryl-[protein] + phosphate. The enzyme catalyses O-phospho-L-threonyl-[protein] + H2O = L-threonyl-[protein] + phosphate. It catalyses the reaction O-phospho-L-tyrosyl-[protein] + H2O = L-tyrosyl-[protein] + phosphate. It carries out the reaction a 1,2-diacyl-sn-glycero-3-phospho-(1'-sn-glycero-3'-phosphate) + H2O = a 1,2-diacyl-sn-glycero-3-phospho-(1'-sn-glycerol) + phosphate. It functions in the pathway phospholipid metabolism; phosphatidylglycerol biosynthesis; phosphatidylglycerol from CDP-diacylglycerol: step 2/2. Its function is as follows. Exhibits phosphatidylglycerophosphate phosphatase activity. Involved in root growth and columella cells organization. May possess protein phosphatase activity. The chain is Phosphatidylglycerophosphate phosphatase PTPMT2 from Arabidopsis thaliana (Mouse-ear cress).